Consider the following 124-residue polypeptide: uncharacterized protein (124 aa).

A dksA C4-type; degenerate zinc finger spans residues 73-94 (CEETGAPIPLAKLAVLPTARTA).

This is an uncharacterized protein from Bacillus subtilis (strain 168).